Here is a 514-residue protein sequence, read N- to C-terminus: Efflux pump aflT (514 aa).

A run of 10 helical transmembrane segments spans residues 13–33 (ISGMKLYLIVLSLLLAVFCVA), 61–81 (SAYLLTTCAFQLLYGKLYALF), 85–105 (WVFLVALCIFEVGSLICGVAP), 116–136 (IAGVGSSGIFTGALVTIAHIV), 146–166 (GLLGGMYGIASVAGPLLGGAF), 174–194 (WCFYINLPVGGVTAVVILFLL), 218–238 (GTIVFTPSIICVLLALQWGGV), 247–267 (IIALFVLFGVLLITFIIIQVL), 289–309 (VFVFFIGASMFVMIYYVPIWF), and 321–341 (GIDSIALILANTAGAIISGAV). Asn-343 carries N-linked (GlcNAc...) asparagine glycosylation. 4 helical membrane passes run 351 to 371 (WFIVSSVIMSIGAGCLTLFTV), 378 to 398 (WIGFLFLYGIGVGFGFQQGAV), 411 to 431 (IGTALIWFVQMLGGALFTSVA), and 485 to 505 (LDVFQVALICSCLSILGAVGI).

Belongs to the major facilitator superfamily. TCR/Tet family.

It localises to the cell membrane. In terms of biological role, efflux pump; part of the gene cluster that mediates the biosynthesis of aflatoxins. This Aspergillus parasiticus (strain ATCC 56775 / NRRL 5862 / SRRC 143 / SU-1) protein is Efflux pump aflT.